A 62-amino-acid polypeptide reads, in one-letter code: Small, acid-soluble spore protein H 1 (62 aa).

It belongs to the SspH family.

It is found in the spore core. This chain is Small, acid-soluble spore protein H 1, found in Clostridium botulinum (strain ATCC 19397 / Type A).